A 101-amino-acid polypeptide reads, in one-letter code: Chaperone modulatory protein CbpM (101 aa).

Belongs to the CbpM family.

Its function is as follows. Interacts with CbpA and inhibits both the DnaJ-like co-chaperone activity and the DNA binding activity of CbpA. Together with CbpA, modulates the activity of the DnaK chaperone system. Does not inhibit the co-chaperone activity of DnaJ. This chain is Chaperone modulatory protein CbpM, found in Pseudomonas putida (strain W619).